We begin with the raw amino-acid sequence, 200 residues long: NADH-quinone oxidoreductase subunit I (200 aa).

2 4Fe-4S ferredoxin-type domains span residues 73-102 (RLLESGNERCIGCGLCEKICVSNCIRMETT) and 112-141 (LNYSINFGRCVYCGLCADVCPELAIVHGGD). The [4Fe-4S] cluster site is built by Cys-82, Cys-85, Cys-88, Cys-92, Cys-121, Cys-124, Cys-127, and Cys-131.

This sequence belongs to the complex I 23 kDa subunit family. In terms of assembly, NDH-1 is composed of 14 different subunits. Subunits NuoA, H, J, K, L, M, N constitute the membrane sector of the complex. The cofactor is [4Fe-4S] cluster.

Its subcellular location is the cell inner membrane. It catalyses the reaction a quinone + NADH + 5 H(+)(in) = a quinol + NAD(+) + 4 H(+)(out). Its function is as follows. NDH-1 shuttles electrons from NADH, via FMN and iron-sulfur (Fe-S) centers, to quinones in the respiratory chain. The immediate electron acceptor for the enzyme in this species is believed to be ubiquinone. Couples the redox reaction to proton translocation (for every two electrons transferred, four hydrogen ions are translocated across the cytoplasmic membrane), and thus conserves the redox energy in a proton gradient. This is NADH-quinone oxidoreductase subunit I from Campylobacter hominis (strain ATCC BAA-381 / DSM 21671 / CCUG 45161 / LMG 19568 / NCTC 13146 / CH001A).